The chain runs to 273 residues: Eukaryotic translation initiation factor 3 subunit G-2 (273 aa).

Residues 168–192 (PPFMKDGGGGSGGKNWGRGRDRDDS) are disordered. The span at 173–183 (DGGGGSGGKNW) shows a compositional bias: gly residues. The region spanning 193–271 (SAVRISNLSE…LILCVEWSKP (79 aa)) is the RRM domain.

Belongs to the eIF-3 subunit G family. In terms of assembly, component of the eukaryotic translation initiation factor 3 (eIF-3) complex. The eIF-3 complex interacts with pix.

The protein resides in the cytoplasm. RNA-binding component of the eukaryotic translation initiation factor 3 (eIF-3) complex, which is involved in protein synthesis of a specialized repertoire of mRNAs and, together with other initiation factors, stimulates binding of mRNA and methionyl-tRNAi to the 40S ribosome. The eIF-3 complex specifically targets and initiates translation of a subset of mRNAs involved in cell proliferation. This subunit can bind 18S rRNA. In Drosophila erecta (Fruit fly), this protein is Eukaryotic translation initiation factor 3 subunit G-2.